Here is a 298-residue protein sequence, read N- to C-terminus: Riboflavin transporter (298 aa).

The next 9 helical transmembrane spans lie at leucine 8–alanine 28, phenylalanine 35–leucine 55, valine 79–isoleucine 99, glutamine 101–leucine 121, valine 125–glutamate 145, phenylalanine 151–methionine 171, methionine 184–tryptophan 204, threonine 211–alanine 231, and tryptophan 258–leucine 278. 2 EamA domains span residues glycine 10–leucine 144 and leucine 156–threonine 284.

Belongs to the drug/metabolite transporter (DMT) superfamily. 10 TMS drug/metabolite exporter (DME) (TC 2.A.7.3) family.

The protein localises to the cell membrane. Functionally, transports riboflavin into the cell. This chain is Riboflavin transporter, found in Vibrio cholerae serotype O1 (strain ATCC 39315 / El Tor Inaba N16961).